Reading from the N-terminus, the 612-residue chain is uncharacterized protein (612 aa).

Positions 39–100 (ERDHNLWEIE…KNISVKDLDE (62 aa)) form a coiled coil. The tract at residues 219–241 (PLSSGESLPKKEEEVTKSPSFTL) is disordered. WD repeat units lie at residues 286-325 (TSTQ…NDNS), 337-376 (GHEG…TSDS), 389-432 (GHED…FKIR), 434-470 (DSKQ…LVSQ), 483-523 (AVKD…LLAE), 526-565 (ISKV…STLE), and 574-612 (EEIT…KYLP).

The protein localises to the cytoplasm. This is an uncharacterized protein from Schizosaccharomyces pombe (strain 972 / ATCC 24843) (Fission yeast).